The chain runs to 326 residues: Fructose operon regulatory protein (326 aa).

Positions 1–58 constitute an HTH lacI-type domain; that stretch reads MTLDEIAKLAGVSKTTASYVINGKAQKYRISEKTQHKVMAVVEQYNFRPDHAASALRA. Positions 3–22 form a DNA-binding region, H-T-H motif; that stretch reads LDEIAKLAGVSKTTASYVIN.

Homodimer.

With respect to regulation, interaction with F1P may induce a structural change in the DNA spacer region between the -35 and -10 elements, thereby facilitating RNAP binding to the promoter to trigger the transcriptional activation of the fru operon. Interaction with F1P does not release FruR from its binding sequence. In terms of biological role, regulates the expression of the fruBKA (fru) operon, which encodes proteins involved in the import and metabolism of fructose. In the absence of fructose 1-phosphate (F1P), binds to the promoter region of fruB, interferes with the binding of the RNA polymerase (RNAP) to the promoter and represses the expression of the operon. In the presence of F1P, activates the transcription of the fru operon by facilitating the binding of RNAP to the promoter. Essential for the expression of the fru operon and thus for growth on fructose. The polypeptide is Fructose operon regulatory protein (Vibrio cholerae serotype O1 (strain ATCC 39315 / El Tor Inaba N16961)).